Reading from the N-terminus, the 111-residue chain is UPF0060 membrane protein XCC2880 (111 aa).

4 helical membrane passes run 8–28 (LLLF…PYLW), 34–54 (SVWL…LLTL), 62–82 (VYAA…WWVD), and 91–111 (LLGA…PRSG).

It belongs to the UPF0060 family.

The protein localises to the cell inner membrane. This chain is UPF0060 membrane protein XCC2880, found in Xanthomonas campestris pv. campestris (strain ATCC 33913 / DSM 3586 / NCPPB 528 / LMG 568 / P 25).